Reading from the N-terminus, the 505-residue chain is 2,3-bisphosphoglycerate-independent phosphoglycerate mutase (505 aa).

Mn(2+) contacts are provided by Asp11 and Ser61. Catalysis depends on Ser61, which acts as the Phosphoserine intermediate. Residues His122, 152 to 153, Arg183, Arg189, 259 to 262, and Lys332 contribute to the substrate site; these read RD and RTDR. Residues Asp399, His403, Asp440, His441, and His458 each contribute to the Mn(2+) site.

This sequence belongs to the BPG-independent phosphoglycerate mutase family. In terms of assembly, monomer. It depends on Mn(2+) as a cofactor.

The catalysed reaction is (2R)-2-phosphoglycerate = (2R)-3-phosphoglycerate. Its pathway is carbohydrate degradation; glycolysis; pyruvate from D-glyceraldehyde 3-phosphate: step 3/5. In terms of biological role, catalyzes the interconversion of 2-phosphoglycerate and 3-phosphoglycerate. In Flavobacterium johnsoniae (strain ATCC 17061 / DSM 2064 / JCM 8514 / BCRC 14874 / CCUG 350202 / NBRC 14942 / NCIMB 11054 / UW101) (Cytophaga johnsonae), this protein is 2,3-bisphosphoglycerate-independent phosphoglycerate mutase.